A 133-amino-acid chain; its full sequence is Small ribosomal subunit protein uS8 (133 aa).

The protein belongs to the universal ribosomal protein uS8 family. Part of the 30S ribosomal subunit. Contacts proteins S5 and S12.

Its function is as follows. One of the primary rRNA binding proteins, it binds directly to 16S rRNA central domain where it helps coordinate assembly of the platform of the 30S subunit. The chain is Small ribosomal subunit protein uS8 from Protochlamydia amoebophila (strain UWE25).